We begin with the raw amino-acid sequence, 164 residues long: Peptidyl-prolyl cis-trans isomerase A (164 aa).

An N-acetylmethionine modification is found at Met1. At Val2 the chain carries N-acetylvaline; in Peptidyl-prolyl cis-trans isomerase A, N-terminally processed. Residues 7–163 form the PPIase cyclophilin-type domain; that stretch reads FFDITADGEP…KKITISDCGQ (157 aa). Residue Lys28 is modified to N6-acetyllysine; alternate. Lys28 is covalently cross-linked (Glycyl lysine isopeptide (Lys-Gly) (interchain with G-Cter in SUMO2); alternate). Residue Lys28 forms a Glycyl lysine isopeptide (Lys-Gly) (interchain with G-Cter in ubiquitin); alternate linkage. N6-acetyllysine is present on residues Lys44 and Lys76. A Phosphoserine modification is found at Ser77. Lys82 carries the post-translational modification N6-acetyllysine; alternate. Lys82 participates in a covalent cross-link: Glycyl lysine isopeptide (Lys-Gly) (interchain with G-Cter in SUMO2); alternate. Thr93 carries the phosphothreonine modification. The N-linked (GlcNAc...) asparagine glycan is linked to Asn108. Residues Lys125, Lys131, and Lys133 each carry the N6-acetyllysine modification.

Belongs to the cyclophilin-type PPIase family. PPIase A subfamily. Interacts with protein phosphatase PPP3CA/calcineurin A. Interacts with isoform 2 of BSG/CD147. Interacts with FOXO1; the interaction promotes FOXO1 dephosphorylation, nuclear accumulation and transcriptional activity. Interacts with integrin ITGA2B:ITGB3; the interaction is ROS and peptidyl-prolyl cis-trans isomerase (PPIase) activity-dependent and is increased in the presence of thrombin. Interacts with MAP3K5. Interacts with TARDBP; the interaction is dependent on the RNA-binding activity of TARDBP and the PPIase activity of PPIA/CYPA and the acetylation of PPIA/CYPA at Lys-125 favors the interaction. Interacts with HNRNPA1, HNRNPA2B1, HNRNPC, RBMX, HNRNPK and HNRNPM. Acetylation at Lys-125 markedly inhibits catalysis of cis to trans isomerization. PPIA acetylation also antagonizes the immunosuppressive effects of cyclosporine by inhibiting the sequential steps of cyclosporine binding and calcineurin inhibition. Acetylation at Lys-125 favors the interaction with TARDBP.

Its subcellular location is the cytoplasm. The protein resides in the secreted. It is found in the nucleus. The catalysed reaction is [protein]-peptidylproline (omega=180) = [protein]-peptidylproline (omega=0). Binds cyclosporin A (CsA). CsA mediates some of its effects via an inhibitory action on PPIase. Catalyzes the cis-trans isomerization of proline imidic peptide bonds in oligopeptides. Exerts a strong chemotactic effect on leukocytes partly through activation of one of its membrane receptors BSG/CD147, initiating a signaling cascade that culminates in MAPK/ERK activation. Activates endothelial cells (ECs) in a proinflammatory manner by stimulating activation of NF-kappa-B and ERK, JNK and p38 MAP-kinases and by inducing expression of adhesion molecules including SELE and VCAM1. Induces apoptosis in ECs by promoting the FOXO1-dependent expression of CCL2 and BCL2L11 which are involved in EC chemotaxis and apoptosis. In response to oxidative stress, initiates proapoptotic and antiapoptotic signaling in ECs via activation of NF-kappa-B and AKT1 and up-regulation of antiapoptotic protein BCL2. Negatively regulates MAP3K5/ASK1 kinase activity, autophosphorylation and oxidative stress-induced apoptosis mediated by MAP3K5/ASK1. Necessary for the assembly of TARDBP in heterogeneous nuclear ribonucleoprotein (hnRNP) complexes and regulates TARDBP binding to RNA UG repeats and TARDBP-dependent expression of HDAC6, ATG7 and VCP which are involved in clearance of protein aggregates. Plays an important role in platelet activation and aggregation. Regulates calcium mobilization and integrin ITGA2B:ITGB3 bidirectional signaling via increased ROS production as well as by facilitating the interaction between integrin and the cell cytoskeleton. Binds heparan sulfate glycosaminoglycans. This chain is Peptidyl-prolyl cis-trans isomerase A (Ppia), found in Rattus norvegicus (Rat).